The chain runs to 99 residues: Single insulin-like growth factor-binding domain protein-2 (99 aa).

A signal peptide spans 1–18 (MESLFIFAFGMMLSSASA). The IGFBP N-terminal domain occupies 19 to 98 (LSCIPCVPEE…GQEVGRCRKK (80 aa)). O-linked (GalNAc...) serine glycosylation is present at S20. Cystine bridges form between C21–C44, C24–C46, C29–C47, C35–C50, C58–C74, and C68–C95.

As to expression, expressed in hemocytes.

The protein resides in the secreted. Its function is as follows. Has a role in the innate immune system. The chain is Single insulin-like growth factor-binding domain protein-2 from Cupiennius salei (American wandering spider).